The chain runs to 48 residues: Bacteriocin plantaricin-A (48 aa).

Residues 1 to 25 constitute a propeptide that is removed on maturation; the sequence is MKIQIKGMKQLSNKEMQKIVGGKSS.

As to quaternary structure, active plantaricin A is composed of an alpha chain and a beta chain.

This heat stable bacteriocin inhibits the growth of closely related Lactobacillus species. It may act as a pore-forming protein, creating a channel in the cell membrane through a 'barrel stave' mechanism. The sequence is that of Bacteriocin plantaricin-A (plnA) from Lactiplantibacillus plantarum (strain ATCC BAA-793 / NCIMB 8826 / WCFS1) (Lactobacillus plantarum).